Reading from the N-terminus, the 148-residue chain is Deoxyuridine 5'-triphosphate nucleotidohydrolase (148 aa).

Substrate contacts are provided by residues 68–70 (RSG), asparagine 81, 85–87 (TID), and lysine 95.

Belongs to the dUTPase family. Requires Mg(2+) as cofactor.

The enzyme catalyses dUTP + H2O = dUMP + diphosphate + H(+). It participates in pyrimidine metabolism; dUMP biosynthesis; dUMP from dCTP (dUTP route): step 2/2. Functionally, this enzyme is involved in nucleotide metabolism: it produces dUMP, the immediate precursor of thymidine nucleotides and it decreases the intracellular concentration of dUTP so that uracil cannot be incorporated into DNA. This chain is Deoxyuridine 5'-triphosphate nucleotidohydrolase, found in Rickettsia akari (strain Hartford).